The following is a 362-amino-acid chain: Protein-glutamate methylesterase/protein-glutamine glutaminase (362 aa).

A Response regulatory domain is found at 10–127 (RVLVVDDSAF…SLNMHVARDE (118 aa)). Aspartate 61 carries the post-translational modification 4-aspartylphosphate. The 190-residue stretch at 173 to 362 (RLPRRLVLIG…DAITRAVGEG (190 aa)) folds into the CheB-type methylesterase domain. Residues serine 184, histidine 211, and aspartate 304 contribute to the active site.

This sequence belongs to the CheB family. Phosphorylated by CheA. Phosphorylation of the N-terminal regulatory domain activates the methylesterase activity.

The protein localises to the cytoplasm. The enzyme catalyses [protein]-L-glutamate 5-O-methyl ester + H2O = L-glutamyl-[protein] + methanol + H(+). It carries out the reaction L-glutaminyl-[protein] + H2O = L-glutamyl-[protein] + NH4(+). Involved in chemotaxis. Part of a chemotaxis signal transduction system that modulates chemotaxis in response to various stimuli. Catalyzes the demethylation of specific methylglutamate residues introduced into the chemoreceptors (methyl-accepting chemotaxis proteins or MCP) by CheR. Also mediates the irreversible deamidation of specific glutamine residues to glutamic acid. In Symbiobacterium thermophilum (strain DSM 24528 / JCM 14929 / IAM 14863 / T), this protein is Protein-glutamate methylesterase/protein-glutamine glutaminase.